We begin with the raw amino-acid sequence, 148 residues long: UPF0178 protein SH2212 (148 aa).

The protein belongs to the UPF0178 family.

This chain is UPF0178 protein SH2212, found in Staphylococcus haemolyticus (strain JCSC1435).